Here is a 115-residue protein sequence, read N- to C-terminus: MSLKIRLARAGAKKRPYYHIVVADSRSPRDGRFIEKVGSYNPMLPADHADRIRLVDERIKHWLSNGALATDRVARFLGNAGLAPKPTYNEQPKKSAPKAKAQERAKAAADAAAAA.

The disordered stretch occupies residues Gly81 to Ala115.

The protein belongs to the bacterial ribosomal protein bS16 family.

The protein is Small ribosomal subunit protein bS16 of Gluconobacter oxydans (strain 621H) (Gluconobacter suboxydans).